Here is a 213-residue protein sequence, read N- to C-terminus: ER lumen protein-retaining receptor erd-2.1 (213 aa).

Over 1 to 2 the chain is Lumenal; the sequence is MN. Residues 3–21 form a helical membrane-spanning segment; that stretch reads LFRFTADVAHAIAIVVLLL. Residues 22–35 are Cytoplasmic-facing; the sequence is KIWKSRSCEGISGR. The chain crosses the membrane as a helical span at residues 36–53; the sequence is SQLLFALVFVTRYLDLFT. Residues 54–61 are Lumenal-facing; that stretch reads NFFSFYNT. Residues 62 to 80 form a helical membrane-spanning segment; it reads AMKIFYLVASFGTVYLMWA. Over 81–96 the chain is Cytoplasmic; sequence KFKATYDRNNDSFRIE. Residues 97–110 form a helical membrane-spanning segment; it reads FLVIPSMILALLIN. The Lumenal portion of the chain corresponds to 111–117; that stretch reads HEFIFME. A helical membrane pass occupies residues 118-137; it reads VMWTFSIYLEAVAIMPQLFM. Residues 138–149 lie on the Cytoplasmic side of the membrane; that stretch reads LSRTGNAETITA. A helical transmembrane segment spans residues 150 to 168; the sequence is HYLFALGSYRFLYILNWVY. Residues 169–178 lie on the Lumenal side of the membrane; sequence RYYTESFFDP. Residues 179–199 form a helical membrane-spanning segment; sequence ISVVAGIVQTVLYADFFYLYI. Residues 200–213 lie on the Cytoplasmic side of the membrane; the sequence is TRVIQSNRQFEMSA.

The protein belongs to the ERD2 family.

It is found in the endoplasmic reticulum membrane. Its function is as follows. Required for the retention of luminal endoplasmic reticulum proteins. Determines the specificity of the luminal ER protein retention system. Also required for normal vesicular traffic through the Golgi. The sequence is that of ER lumen protein-retaining receptor erd-2.1 from Caenorhabditis elegans.